Here is a 259-residue protein sequence, read N- to C-terminus: UPF0246 protein PA14_18590 (259 aa).

Belongs to the UPF0246 family.

This is UPF0246 protein PA14_18590 from Pseudomonas aeruginosa (strain UCBPP-PA14).